The chain runs to 117 residues: Phosphoribosyl-ATP pyrophosphatase (117 aa).

Residues 96 to 105 (GVSGIEEKLS) are compositionally biased toward basic and acidic residues. The interval 96–117 (GVSGIEEKLSRSQNQPEPTKAE) is disordered. Over residues 106–117 (RSQNQPEPTKAE) the composition is skewed to polar residues.

This sequence belongs to the PRA-PH family.

The protein resides in the cytoplasm. It carries out the reaction 1-(5-phospho-beta-D-ribosyl)-ATP + H2O = 1-(5-phospho-beta-D-ribosyl)-5'-AMP + diphosphate + H(+). Its pathway is amino-acid biosynthesis; L-histidine biosynthesis; L-histidine from 5-phospho-alpha-D-ribose 1-diphosphate: step 2/9. This Nitrosomonas eutropha (strain DSM 101675 / C91 / Nm57) protein is Phosphoribosyl-ATP pyrophosphatase.